Reading from the N-terminus, the 495-residue chain is MSEEMNDQMLVRRQKLQELYDLGIDPFGSKFDRSGLSSDLKEEWDQYSKEELVEKEADSHVAIAGRLMTKRGKGKAGFAHVQDLAGQIQIYVRKDQVGDDEFDLWKNADLGDIVGVEGVMFKTNTGELSVKAKKFTLLTKSLRPLPDKFHGLQDIEQRYRQRYLDLITNEDSTRTFINRSKIIQEMRNYLNNKGFLEVETPMMHQIAGGAAARPFVTHHNALDATLYMRIAIELHLKRLIVGGLEKVYEIGRVFRNEGVSTRHNPEFTMIELYEAYADYHDIMDLTESMVRHIANEVLGSAKVQYNGETIDLESAWTRLHIVDAVKEATGVDFYEVKSDEEAKALAKEHGIEIKDTMKYGHILNEFFEQKVEETLIQPTFIYGHPTEISPLAKKNPEDPRFTDRFELFIVGREHANAFTELNDPIDQKGRFEAQLAEKAQGNDEAHEMDEDYIEALEYGMPPTGGLGIGIDRLVMLLTDSPSIRDVLLFPYMRQK.

Residues glutamate 406 and glutamate 413 each contribute to the Mg(2+) site.

This sequence belongs to the class-II aminoacyl-tRNA synthetase family. Homodimer. Mg(2+) is required as a cofactor.

It is found in the cytoplasm. It carries out the reaction tRNA(Lys) + L-lysine + ATP = L-lysyl-tRNA(Lys) + AMP + diphosphate. This chain is Lysine--tRNA ligase, found in Staphylococcus aureus (strain MRSA252).